The sequence spans 147 residues: NADH-quinone oxidoreductase subunit A (147 aa).

A run of 3 helical transmembrane segments spans residues 16–36 (FAIF…GGWF), 68–88 (FYLV…LFAW), and 98–118 (VGFV…VYLV).

It belongs to the complex I subunit 3 family. In terms of assembly, NDH-1 is composed of 13 different subunits. Subunits NuoA, H, J, K, L, M, N constitute the membrane sector of the complex.

Its subcellular location is the cell inner membrane. It catalyses the reaction a quinone + NADH + 5 H(+)(in) = a quinol + NAD(+) + 4 H(+)(out). Functionally, NDH-1 shuttles electrons from NADH, via FMN and iron-sulfur (Fe-S) centers, to quinones in the respiratory chain. The immediate electron acceptor for the enzyme in this species is believed to be ubiquinone. Couples the redox reaction to proton translocation (for every two electrons transferred, four hydrogen ions are translocated across the cytoplasmic membrane), and thus conserves the redox energy in a proton gradient. This Citrobacter koseri (strain ATCC BAA-895 / CDC 4225-83 / SGSC4696) protein is NADH-quinone oxidoreductase subunit A.